Here is a 179-residue protein sequence, read N- to C-terminus: ADP-ribosylation factor (179 aa).

The N-myristoyl glycine moiety is linked to residue Gly2. GTP is bound by residues 24-31, 67-71, and 126-129; these read GLDAAGKT, DVGGQ, and NKQD.

It belongs to the small GTPase superfamily. Arf family.

The protein localises to the golgi apparatus. In terms of biological role, GTP-binding protein involved in protein trafficking; may modulate vesicle budding and uncoating within the Golgi apparatus. The protein is ADP-ribosylation factor (ARF1) of Candida albicans (strain SC5314 / ATCC MYA-2876) (Yeast).